Here is a 135-residue protein sequence, read N- to C-terminus: C-type lectin BpLec (135 aa).

Disulfide bonds link Cys-3/Cys-14, Cys-31/Cys-131, Cys-38/Cys-133, and Cys-106/Cys-123. A C-type lectin domain is found at 10-132 (MNGLCYKIFD…CESKNAFLCQ (123 aa)). Gln-96, Asp-98, Glu-104, Asn-119, and Asp-120 together coordinate Ca(2+). Residues 96-98 (QPD) carry the Galactose-binding motif.

The protein belongs to the true venom lectin family. As to quaternary structure, homodimer; disulfide-linked. As to expression, expressed by the venom gland.

Its subcellular location is the secreted. In terms of biological role, this lectin displays hemagglutinating activity on dog (128'000 HU/mg) and cat erythrocytes, that is inhibited by beta-galactosides (D-galactose, D-lactose, and N-acetyl-D-galactosamine) and EDTA. In addition, has been shown to hemagglutinate promastigote forms of Leishmania amazonensis. Also inhibits Gram-positive (S.aureus ATCC 25923) (MIC is 31.25 ug/ml) but not Gram-negative (E.coli ATCC 25922) bacteria. Is a calcium-dependent lectin. The polypeptide is C-type lectin BpLec (Bothrops pauloensis (Neuwied's lancehead)).